We begin with the raw amino-acid sequence, 801 residues long: U-box domain-containing protein 34 (801 aa).

The tract at residues 205–309 (RSPTLPDPRQ…PETSRKSKKV (105 aa)) is disordered. Positions 236 to 254 (LTCNKPKTPQSSKASSATT) are enriched in polar residues. Positions 289–309 (VSEHRDSDRSPPETSRKSKKV) are enriched in basic and acidic residues. The stretch at 301–395 (ETSRKSKKVE…ETAKALLARE (95 aa)) forms a coiled coil. A Protein kinase domain is found at 442-705 (FSPEKVIGEG…DLKSEVIPVL (264 aa)). ATP-binding positions include 448–456 (IGEGGYGKV) and Lys-469. The active-site Proton acceptor is the Asp-564. The 74-residue stretch at 724 to 797 (RAPSHYFCPI…RDWKSRVRFS (74 aa)) folds into the U-box domain.

The protein belongs to the protein kinase superfamily. Ser/Thr protein kinase family.

The enzyme catalyses L-seryl-[protein] + ATP = O-phospho-L-seryl-[protein] + ADP + H(+). The catalysed reaction is L-threonyl-[protein] + ATP = O-phospho-L-threonyl-[protein] + ADP + H(+). It catalyses the reaction S-ubiquitinyl-[E2 ubiquitin-conjugating enzyme]-L-cysteine + [acceptor protein]-L-lysine = [E2 ubiquitin-conjugating enzyme]-L-cysteine + N(6)-ubiquitinyl-[acceptor protein]-L-lysine.. It functions in the pathway protein modification; protein ubiquitination. In terms of biological role, functions as an E3 ubiquitin ligase. The protein is U-box domain-containing protein 34 (PUB34) of Arabidopsis thaliana (Mouse-ear cress).